A 1143-amino-acid polypeptide reads, in one-letter code: Disease resistance protein Pik-1 (1143 aa).

Residues 1-190 (MEAAAMAVTA…PLRIMGGEMQ (190 aa)) are structured coiled coil (CC) domain. The region spanning 189-258 (MQKIVFKIPM…KVGHAELLQV (70 aa)) is the HMA domain. The interval 191-264 (KIVFKIPMVD…LLQVSQVKED (74 aa)) is HMA-like domain. One can recognise an NB-ARC domain in the interval 282–570 (HEVKTICILG…WIAEGFVSEE (289 aa)). LRR repeat units lie at residues 681–706 (FKRLRVLDLEDNKDIQDSHLQGICEQ), 708–731 (SLRVRYLGLKGTRIRKLPQEMRKL), 732–754 (KHLEILYVGSTRISELPQEIGEL), 756–777 (HLRILDVRNTDITELPLQIREL), 778–800 (QHLHTLDVRNTPISELPPQVGKL), 802–823 (NLKIMCVRSTGVRELPKEIGEL), 824–848 (NHLQTLDVRNTRVRELPWQAGQISQ), 945–968 (MPNLQTLVLRFEALPRQPITINGT), 979–1002 (DSRLPRIAFHEDAMPNLKLLEFKF), and 1004–1027 (AGPASNDAIGITNLKSLQKVVFRC).

The protein belongs to the disease resistance NB-LRR family. In terms of assembly, interacts with AVR-Pik through its N-terminal part containing the HMA-like domain.

Disease resistance (R) protein that specifically recognizes the AVR-Pik effector avirulence protein from M.oryzae. Resistance proteins guard the plant against pathogens that contain an appropriate avirulence protein via an indirect interaction with this avirulence protein. That triggers a defense system including the hypersensitive response, which restricts the pathogen growth. Contribution of Pik-2 is required to recognize the effector avirulence protein AVR-Pik. In Oryza sativa subsp. japonica (Rice), this protein is Disease resistance protein Pik-1.